The following is a 353-amino-acid chain: Protein pelota homolog (353 aa).

The protein belongs to the eukaryotic release factor 1 family. Pelota subfamily. Monomer. The cofactor is a divalent metal cation.

The protein resides in the cytoplasm. Its function is as follows. May function in recognizing stalled ribosomes, interact with stem-loop structures in stalled mRNA molecules, and effect endonucleolytic cleavage of the mRNA. May play a role in the release non-functional ribosomes and degradation of damaged mRNAs. Has endoribonuclease activity. The sequence is that of Protein pelota homolog from Methanopyrus kandleri (strain AV19 / DSM 6324 / JCM 9639 / NBRC 100938).